Here is a 343-residue protein sequence, read N- to C-terminus: Lipopolysaccharide core biosynthesis glycosyltransferase LpsD (343 aa).

It belongs to the glycosyltransferase group 1 family. Glycosyltransferase 4 subfamily.

The protein operates within bacterial outer membrane biogenesis; LPS core biosynthesis. This is Lipopolysaccharide core biosynthesis glycosyltransferase LpsD (lpsD) from Rhizobium meliloti (strain 1021) (Ensifer meliloti).